We begin with the raw amino-acid sequence, 379 residues long: Copper-containing nitrite reductase (379 aa).

The tat-type signal signal peptide spans 1-32; it reads MSEQFRLTRRSMLAGAAVAGALAPVVTSVAHA. Plastocyanin-like domains follow at residues 33–214 and 215–379; these read EGGG…YDKV and YYVG…PTSG. Residues His134, His139, His174, Cys175, His184, Met189, and His345 each coordinate Cu cation.

This sequence belongs to the multicopper oxidase family. Homotrimer. Cu(2+) is required as a cofactor. Requires Cu(+) as cofactor. The cofactor is FAD. Post-translationally, predicted to be exported by the Tat system. The position of the signal peptide cleavage has not been experimentally proven.

Its subcellular location is the periplasm. The enzyme catalyses nitric oxide + Fe(III)-[cytochrome c] + H2O = Fe(II)-[cytochrome c] + nitrite + 2 H(+). Its pathway is nitrogen metabolism; nitrate reduction (denitrification); dinitrogen from nitrate: step 2/4. This Neorhizobium galegae (Rhizobium galegae) protein is Copper-containing nitrite reductase (nirU).